Here is a 480-residue protein sequence, read N- to C-terminus: MDVKDTGINRSDTPISDQDHDFRQWNHSSLDSNFLSLRSQIFEASYRRTDLIRVNHELFHERDALRRRNSELEAGILEEVMIREEMKRDLEVSKETVSELEGEAKEKTKLLSDIADYVRSMEDRLSKLIRCLNEENVPEEERGRKLETKEYNSKSILELVKEVVTKLETFQESTKKKKMELSRSVEFLEEENRDINVLLRAALFEKQTAEKQLKEMNDQKGLALLQIAGRGLQRIGFGFGLGESVEESSETGNIANEEEENGVVIAIEKTMKKLRQEVSQLKISLEESRLEEVGLRKVTEEQAQKLAENTVYINKLQNQEKFLAQNVEELVKAIREAESEVSRWREACELEVEAGQREVEVRDQLIAVLKSEVEKLRSALARSEGKLKLKEELAKAAMVAEEAAEKSLRLAERRIAQLLSRIEHLYRQLEEAESTERRRGKFRYVWCWPMWRFPTAASTAATATGSSSYTSNRALLRYDA.

Residues 1–20 (MDVKDTGINRSDTPISDQDH) form a disordered region.

This is an uncharacterized protein from Arabidopsis thaliana (Mouse-ear cress).